We begin with the raw amino-acid sequence, 402 residues long: Phosphoglycerate kinase (402 aa).

Substrate is bound by residues Asp24–Asn26, Arg40, His63–Arg66, Arg122, and Arg155. ATP-binding positions include Lys206, Gly297, Glu328, and Gly358–Ser361.

This sequence belongs to the phosphoglycerate kinase family. In terms of assembly, monomer.

The protein localises to the cytoplasm. The enzyme catalyses (2R)-3-phosphoglycerate + ATP = (2R)-3-phospho-glyceroyl phosphate + ADP. Its pathway is carbohydrate degradation; glycolysis; pyruvate from D-glyceraldehyde 3-phosphate: step 2/5. The protein is Phosphoglycerate kinase of Prochlorococcus marinus (strain AS9601).